The following is a 131-amino-acid chain: uncharacterized protein (131 aa).

2 helical membrane passes run 52–72 (LIMI…FYLV) and 97–117 (SDII…YDVG).

The protein resides in the membrane. This is an uncharacterized protein from Acanthamoeba polyphaga mimivirus (APMV).